Reading from the N-terminus, the 666-residue chain is tRNA 5-methylaminomethyl-2-thiouridine biosynthesis bifunctional protein MnmC (666 aa).

A tRNA (mnm(5)s(2)U34)-methyltransferase region spans residues 1 to 253; the sequence is MSSPFVPIIT…KRHMICAHYE (253 aa). The segment at 283–666 is FAD-dependent cmnm(5)s(2)U34 oxidoreductase; it reads VGGGLAGCFI…FLRKKIIQGP (384 aa).

It in the N-terminal section; belongs to the methyltransferase superfamily. tRNA (mnm(5)s(2)U34)-methyltransferase family. The protein in the C-terminal section; belongs to the DAO family. FAD is required as a cofactor.

Its subcellular location is the cytoplasm. It catalyses the reaction 5-aminomethyl-2-thiouridine(34) in tRNA + S-adenosyl-L-methionine = 5-methylaminomethyl-2-thiouridine(34) in tRNA + S-adenosyl-L-homocysteine + H(+). In terms of biological role, catalyzes the last two steps in the biosynthesis of 5-methylaminomethyl-2-thiouridine (mnm(5)s(2)U) at the wobble position (U34) in tRNA. Catalyzes the FAD-dependent demodification of cmnm(5)s(2)U34 to nm(5)s(2)U34, followed by the transfer of a methyl group from S-adenosyl-L-methionine to nm(5)s(2)U34, to form mnm(5)s(2)U34. The polypeptide is tRNA 5-methylaminomethyl-2-thiouridine biosynthesis bifunctional protein MnmC (Legionella pneumophila (strain Lens)).